A 223-amino-acid chain; its full sequence is UPF0502 protein Shew185_1758 (223 aa).

It belongs to the UPF0502 family.

The polypeptide is UPF0502 protein Shew185_1758 (Shewanella baltica (strain OS185)).